A 330-amino-acid polypeptide reads, in one-letter code: Phosphate acyltransferase (330 aa).

This sequence belongs to the PlsX family. In terms of assembly, homodimer. Probably interacts with PlsY.

The protein localises to the cytoplasm. The enzyme catalyses a fatty acyl-[ACP] + phosphate = an acyl phosphate + holo-[ACP]. Its pathway is lipid metabolism; phospholipid metabolism. Functionally, catalyzes the reversible formation of acyl-phosphate (acyl-PO(4)) from acyl-[acyl-carrier-protein] (acyl-ACP). This enzyme utilizes acyl-ACP as fatty acyl donor, but not acyl-CoA. This chain is Phosphate acyltransferase, found in Campylobacter hominis (strain ATCC BAA-381 / DSM 21671 / CCUG 45161 / LMG 19568 / NCTC 13146 / CH001A).